A 209-amino-acid polypeptide reads, in one-letter code: Thiamine-phosphate synthase (209 aa).

Residues 35–39 (QLRNK) and Asn67 each bind 4-amino-2-methyl-5-(diphosphooxymethyl)pyrimidine. Asp68 and Asp87 together coordinate Mg(2+). Ser106 is a 4-amino-2-methyl-5-(diphosphooxymethyl)pyrimidine binding site. 132–134 (TGS) lines the 2-[(2R,5Z)-2-carboxy-4-methylthiazol-5(2H)-ylidene]ethyl phosphate pocket. Lys135 serves as a coordination point for 4-amino-2-methyl-5-(diphosphooxymethyl)pyrimidine. 2-[(2R,5Z)-2-carboxy-4-methylthiazol-5(2H)-ylidene]ethyl phosphate is bound by residues Gly163 and 183–184 (IS).

It belongs to the thiamine-phosphate synthase family. It depends on Mg(2+) as a cofactor.

It catalyses the reaction 2-[(2R,5Z)-2-carboxy-4-methylthiazol-5(2H)-ylidene]ethyl phosphate + 4-amino-2-methyl-5-(diphosphooxymethyl)pyrimidine + 2 H(+) = thiamine phosphate + CO2 + diphosphate. It carries out the reaction 2-(2-carboxy-4-methylthiazol-5-yl)ethyl phosphate + 4-amino-2-methyl-5-(diphosphooxymethyl)pyrimidine + 2 H(+) = thiamine phosphate + CO2 + diphosphate. The catalysed reaction is 4-methyl-5-(2-phosphooxyethyl)-thiazole + 4-amino-2-methyl-5-(diphosphooxymethyl)pyrimidine + H(+) = thiamine phosphate + diphosphate. It participates in cofactor biosynthesis; thiamine diphosphate biosynthesis; thiamine phosphate from 4-amino-2-methyl-5-diphosphomethylpyrimidine and 4-methyl-5-(2-phosphoethyl)-thiazole: step 1/1. Functionally, condenses 4-methyl-5-(beta-hydroxyethyl)thiazole monophosphate (THZ-P) and 2-methyl-4-amino-5-hydroxymethyl pyrimidine pyrophosphate (HMP-PP) to form thiamine monophosphate (TMP). In Chlorobium phaeovibrioides (strain DSM 265 / 1930) (Prosthecochloris vibrioformis (strain DSM 265)), this protein is Thiamine-phosphate synthase.